A 163-amino-acid polypeptide reads, in one-letter code: Nucleotide-binding protein RBAM_011030 (163 aa).

Belongs to the YajQ family.

Its function is as follows. Nucleotide-binding protein. This Bacillus velezensis (strain DSM 23117 / BGSC 10A6 / LMG 26770 / FZB42) (Bacillus amyloliquefaciens subsp. plantarum) protein is Nucleotide-binding protein RBAM_011030.